The chain runs to 216 residues: Protein-L-isoaspartate O-methyltransferase (216 aa).

Residue serine 64 is part of the active site.

This sequence belongs to the methyltransferase superfamily. L-isoaspartyl/D-aspartyl protein methyltransferase family.

It is found in the cytoplasm. The catalysed reaction is [protein]-L-isoaspartate + S-adenosyl-L-methionine = [protein]-L-isoaspartate alpha-methyl ester + S-adenosyl-L-homocysteine. In terms of biological role, catalyzes the methyl esterification of L-isoaspartyl residues in peptides and proteins that result from spontaneous decomposition of normal L-aspartyl and L-asparaginyl residues. It plays a role in the repair and/or degradation of damaged proteins. In Paracoccus denitrificans (strain Pd 1222), this protein is Protein-L-isoaspartate O-methyltransferase.